Consider the following 1196-residue polypeptide: Phosphatidylinositol-3,5-bisphosphate 3-phosphatase MTMR3 (1196 aa).

Position 8 is a phosphoserine (serine 8). Positions 155–576 (EHVTSRFKNE…RNLMLWSAVY (422 aa)) constitute a Myotubularin phosphatase domain. A 1,2-diacyl-sn-glycero-3-phospho-(1D-myo-inositol-3,5-bisphosphate)-binding residues include asparagine 326, asparagine 351, and isoleucine 352. A 1,2-diacyl-sn-glycero-3-phospho-(1D-myo-inositol-3-phosphate) contacts are provided by asparagine 326, asparagine 351, and isoleucine 352. Cysteine 413 (phosphocysteine intermediate) is an active-site residue. Residues serine 414, aspartate 415, glycine 416, tryptophan 417, aspartate 418, arginine 419, lysine 455, and arginine 459 each contribute to the a 1,2-diacyl-sn-glycero-3-phospho-(1D-myo-inositol-3,5-bisphosphate) site. A 1,2-diacyl-sn-glycero-3-phospho-(1D-myo-inositol-3-phosphate) contacts are provided by serine 414, aspartate 415, glycine 416, tryptophan 417, aspartate 418, and arginine 419. Arginine 459 lines the a 1,2-diacyl-sn-glycero-3-phospho-(1D-myo-inositol-3-phosphate) pocket. The interval 587-612 (DDSCAPYPVPGTSPDEPPLSRLPKTR) is disordered. The span at 593 to 603 (YPVPGTSPDEP) shows a compositional bias: pro residues. Residues serine 613, serine 633, serine 647, and serine 651 each carry the phosphoserine modification. Disordered stretches follow at residues 697-719 (TKEESGVEEPTHRGHTEVPEVKE) and 855-900 (ESGP…HRTS). Serine 907 carries the phosphoserine modification. Over residues 993–1008 (NSHSGRPSTTSSPDQP) the composition is skewed to polar residues. Positions 993–1019 (NSHSGRPSTTSSPDQPSRSHLDDDGMP) are disordered. Residues 1027–1060 (QRLRQIESGHQQEVETLKKQVQELKSRLESQYLT) adopt a coiled-coil conformation. The residue at position 1062 (serine 1062) is a Phosphoserine. Residues 1117–1177 (DHLAAHCYAC…VCKSCYSSLH (61 aa)) form an FYVE-type zinc finger. Residues cysteine 1123, cysteine 1126, cysteine 1139, cysteine 1142, cysteine 1147, cysteine 1150, cysteine 1169, and cysteine 1172 each coordinate Zn(2+).

This sequence belongs to the protein-tyrosine phosphatase family. Non-receptor class myotubularin subfamily. In terms of assembly, forms heterodimers with MTMR4 that recruit both CEP55 and PLK1; occurs during early mitosis, regulates the phosphorylation of CEP55 by PLK1 and its recruitment to the midbody where it mediates cell abscission.

It localises to the cytoplasm. The protein resides in the cytosol. Its subcellular location is the membrane. It carries out the reaction a 1,2-diacyl-sn-glycero-3-phospho-(1D-myo-inositol-3,5-bisphosphate) + H2O = a 1,2-diacyl-sn-glycero-3-phospho-(1D-myo-inositol-5-phosphate) + phosphate. The enzyme catalyses a 1,2-diacyl-sn-glycero-3-phospho-(1D-myo-inositol-3-phosphate) + H2O = a 1,2-diacyl-sn-glycero-3-phospho-(1D-myo-inositol) + phosphate. The catalysed reaction is 1,2-dihexadecanoyl-sn-glycero-3-phospho-(1D-myo-inositol-3-phosphate) + H2O = 1,2-dihexadecanoyl-sn-glycero-3-phospho-(1D-myo-inositol) + phosphate. It catalyses the reaction 1,2-dioctanoyl-sn-glycero-3-phospho-(1-D-myo-inositol-3-phosphate) + H2O = 1,2-dioctanoyl-sn-glycero-3-phospho-(1D-myo-inositol) + phosphate. It carries out the reaction 1,2-dihexadecanoyl-sn-glycero-3-phospho-(1D-myo-inositol-3,5-phosphate) + H2O = 1,2-dihexadecanoyl-sn-glycero-3-phospho-(1D-myo-inositol-5-phosphate) + phosphate. Its function is as follows. Lipid phosphatase that specifically dephosphorylates the D-3 position of phosphatidylinositol 3-phosphate and phosphatidylinositol 3,5-bisphosphate, generating phosphatidylinositol and phosphatidylinositol 5-phosphate. Decreases the levels of phosphatidylinositol 3-phosphate, a phospholipid found in cell membranes where it acts as key regulator of both cell signaling and intracellular membrane traffic. Could also have a molecular sequestering/adapter activity and regulate biological processes independently of its phosphatase activity. It includes the regulation of midbody abscission during mitotic cytokinesis. This Mus musculus (Mouse) protein is Phosphatidylinositol-3,5-bisphosphate 3-phosphatase MTMR3.